We begin with the raw amino-acid sequence, 53 residues long: Sec-independent protein translocase protein TatA (53 aa).

Residues 1–21 (MGMSLSHLLIVLLIIFVLFGA) traverse the membrane as a helical segment.

The protein belongs to the TatA/E family. In terms of assembly, the Tat system comprises two distinct complexes: a TatABC complex, containing multiple copies of TatA, TatB and TatC subunits, and a separate TatA complex, containing only TatA subunits. Substrates initially bind to the TatABC complex, which probably triggers association of the separate TatA complex to form the active translocon.

It localises to the cell inner membrane. In terms of biological role, part of the twin-arginine translocation (Tat) system that transports large folded proteins containing a characteristic twin-arginine motif in their signal peptide across membranes. TatA could form the protein-conducting channel of the Tat system. The protein is Sec-independent protein translocase protein TatA of Rickettsia conorii (strain ATCC VR-613 / Malish 7).